We begin with the raw amino-acid sequence, 61 residues long: Small ribosomal subunit protein uS14 (61 aa).

Residues C24, C27, C40, and C43 each contribute to the Zn(2+) site.

Belongs to the universal ribosomal protein uS14 family. Zinc-binding uS14 subfamily. In terms of assembly, part of the 30S ribosomal subunit. Contacts proteins S3 and S10. Zn(2+) is required as a cofactor.

In terms of biological role, binds 16S rRNA, required for the assembly of 30S particles and may also be responsible for determining the conformation of the 16S rRNA at the A site. The protein is Small ribosomal subunit protein uS14 of Syntrophotalea carbinolica (strain DSM 2380 / NBRC 103641 / GraBd1) (Pelobacter carbinolicus).